The chain runs to 116 residues: Large ribosomal subunit protein bL17 (116 aa).

Belongs to the bacterial ribosomal protein bL17 family. As to quaternary structure, part of the 50S ribosomal subunit. Contacts protein L32.

This chain is Large ribosomal subunit protein bL17, found in Synechococcus sp. (strain JA-3-3Ab) (Cyanobacteria bacterium Yellowstone A-Prime).